The sequence spans 438 residues: RNA polymerase sigma factor SigA (438 aa).

Over residues 1–11 (MKKSKSKKKAA) the composition is skewed to basic residues. The segment at 1–69 (MKKSKSKKKA…PLDLEGPLEA (69 aa)) is disordered. Residues 12 to 26 (KAQEVEVKEPVKEPE) are compositionally biased toward basic and acidic residues. 2 stretches are compositionally biased toward acidic residues: residues 27–45 (PLPE…EPDP) and 52–69 (PELE…PLEA). Residues 93–128 (SDPVRQYLHEIGQVPLLTLEEEIDLARKVEEGMEAI) are sigma-70 factor domain-1. The interval 202–272 (LIEANLRLVV…NRAIADQART (71 aa)) is sigma-70 factor domain-2. The Interaction with polymerase core subunit RpoC signature appears at 226 to 229 (DLIQ). The tract at residues 281-359 (ETINKLSRTA…DENLPSPVEA (79 aa)) is sigma-70 factor domain-3. Residues 372–424 (ALSKLSEREAMVLKLRKGLIDGREHTLEEVGAYFGVTRERIRQIENKALRKLK) form a sigma-70 factor domain-4 region. The segment at residues 398-417 (LEEVGAYFGVTRERIRQIEN) is a DNA-binding region (H-T-H motif).

The protein belongs to the sigma-70 factor family. RpoD/SigA subfamily. In terms of assembly, interacts transiently with the RNA polymerase catalytic core formed by RpoA, RpoB, RpoC and RpoZ (2 alpha, 1 beta, 1 beta' and 1 omega subunit) to form the RNA polymerase holoenzyme that can initiate transcription.

Its subcellular location is the cytoplasm. Sigma factors are initiation factors that promote the attachment of RNA polymerase to specific initiation sites and are then released. This sigma factor is the primary sigma factor during exponential growth. The chain is RNA polymerase sigma factor SigA from Thermus aquaticus.